We begin with the raw amino-acid sequence, 282 residues long: Serine/threonine-protein kinase Aurora-2 (282 aa).

A Protein kinase domain is found at 19 to 270; it reads FDIGKPLGRG…LHKLLEHPWI (252 aa). ATP-binding positions include 25–33 and Lys-48; that span reads LGRGKFGHV. The active-site Proton acceptor is Asp-142. The residue at position 164 (Ser-164) is a Phosphoserine. The residue at position 173 (Thr-173) is a Phosphothreonine.

Belongs to the protein kinase superfamily. Ser/Thr protein kinase family. Aurora subfamily. Post-translationally, phosphorylation at Thr-173 may regulate activity and degradation of AUR2 in a cell cycle dependent manner. In terms of tissue distribution, abundant in roots, flowers and flower buds, low or absent in expanded leaves, stems and siliques.

Its subcellular location is the nucleus membrane. The protein resides in the cytoplasm. The protein localises to the cytoskeleton. It localises to the spindle. It is found in the spindle pole. The catalysed reaction is L-seryl-[protein] + ATP = O-phospho-L-seryl-[protein] + ADP + H(+). It catalyses the reaction L-threonyl-[protein] + ATP = O-phospho-L-threonyl-[protein] + ADP + H(+). Its function is as follows. Phosphorylates specifically 'Ser-10' of histone H3 in vitro. Associates with cytoskeletal structures that are necessary for cytokinesis and with the microtubule spindle. Might colocalize with gamma-tubulin and function in microtubule organizing centers (MTOCs). This chain is Serine/threonine-protein kinase Aurora-2 (AUR2), found in Arabidopsis thaliana (Mouse-ear cress).